A 441-amino-acid polypeptide reads, in one-letter code: Ribulose bisphosphate carboxylase large chain (441 aa).

Residues Asn89 and Thr139 each contribute to the substrate site. Lys141 functions as the Proton acceptor in the catalytic mechanism. Lys143 contributes to the substrate binding site. Positions 167, 169, and 170 each coordinate Mg(2+). Lys167 carries the post-translational modification N6-carboxylysine. His260 (proton acceptor) is an active-site residue. Substrate-binding residues include Arg261, His293, and Ser345.

This sequence belongs to the RuBisCO large chain family. Type I subfamily. Heterohexadecamer of 8 large chains and 8 small chains; disulfide-linked. The disulfide link is formed within the large subunit homodimers. The cofactor is Mg(2+). In terms of processing, the disulfide bond which can form in the large chain dimeric partners within the hexadecamer appears to be associated with oxidative stress and protein turnover.

It is found in the plastid. The protein localises to the chloroplast. It catalyses the reaction 2 (2R)-3-phosphoglycerate + 2 H(+) = D-ribulose 1,5-bisphosphate + CO2 + H2O. It carries out the reaction D-ribulose 1,5-bisphosphate + O2 = 2-phosphoglycolate + (2R)-3-phosphoglycerate + 2 H(+). Its function is as follows. RuBisCO catalyzes two reactions: the carboxylation of D-ribulose 1,5-bisphosphate, the primary event in carbon dioxide fixation, as well as the oxidative fragmentation of the pentose substrate in the photorespiration process. Both reactions occur simultaneously and in competition at the same active site. The protein is Ribulose bisphosphate carboxylase large chain of Polemonium reptans (Greek valerian).